The following is a 61-amino-acid chain: Alpha-conotoxin-like Tx1.2 (61 aa).

An N-terminal signal peptide occupies residues 1–20; the sequence is MFTVFLLVVLATTVVSFTSG. Residues 21–42 constitute a propeptide that is removed on maturation; sequence RSTFRGRNAAAKASGLVSLTDR. Residues P44 and P50 each carry the 4-hydroxyproline modification. Disulfide bonds link C46/C52 and C47/C60. The segment at 48–50 is ser-Xaa-Pro motif, crucial for potent interaction with nAChR; that stretch reads SHP.

This sequence belongs to the conotoxin A superfamily. In terms of tissue distribution, expressed by the venom duct.

Its subcellular location is the secreted. Its function is as follows. Alpha-conotoxins act on postsynaptic membranes, they bind to the nicotinic acetylcholine receptors (nAChR) and thus inhibit them. This toxin also inhibits high voltage-activated (HVA) calcium channel currents in rat DRG neurons (8% inhibition at 1 uM toxin) probably by activating GABA(B) receptors (GABBR1 and/or GABBR2). The chain is Alpha-conotoxin-like Tx1.2 from Conus textile (Cloth-of-gold cone).